The chain runs to 181 residues: Probable nicotinate-nucleotide adenylyltransferase (181 aa).

Belongs to the NadD family.

It carries out the reaction nicotinate beta-D-ribonucleotide + ATP + H(+) = deamido-NAD(+) + diphosphate. It functions in the pathway cofactor biosynthesis; NAD(+) biosynthesis; deamido-NAD(+) from nicotinate D-ribonucleotide: step 1/1. Its function is as follows. Catalyzes the reversible adenylation of nicotinate mononucleotide (NaMN) to nicotinic acid adenine dinucleotide (NaAD). The polypeptide is Probable nicotinate-nucleotide adenylyltransferase (Campylobacter jejuni subsp. jejuni serotype O:6 (strain 81116 / NCTC 11828)).